The primary structure comprises 425 residues: MLDQRLLRDNPELISRELGRRGMDVDLTGLQLIAKLQRDLEERRSGLQAEGNRIGKEVGQRIQAGADPKGAEVAELRLQGNQIKQKVAILEDEEKQLTAQLREELLSYPNLPSEACPDGRSEDDNKEVRRWGDPRVEDGLKEHWQIAEQLSLLDTERSVRIAQSRFVTLFGQGARLERALINFMLDLHTGKGYREVLPPVLVNSASLTGSGQLPKFAEESFRCADDDLWLTPTAEVPLTSLHRDEIIPSDQLPLRYVAYSPCFRREAGSYGRDTRGLIRLHQFNKVELYWFVHPEHSEEAHELITADAEAVLQALELPYRVLELCTGDLGFSAARTYDLEVWLAGAGAYREISSCSVCSDFQARRSSIRTKDGKTTRLVHTLNGSGLAIGRTMAALLENGQQPDGSVKLPQALVPYFGCDRLQPE.

The segment at 108-134 (YPNLPSEACPDGRSEDDNKEVRRWGDP) is disordered. Positions 117–134 (PDGRSEDDNKEVRRWGDP) are enriched in basic and acidic residues. 233–235 (TAE) is an L-serine binding site. 264–266 (RRE) provides a ligand contact to ATP. Glutamate 287 contributes to the L-serine binding site. 351–354 (EISS) lines the ATP pocket. Serine 385 contacts L-serine.

The protein belongs to the class-II aminoacyl-tRNA synthetase family. Type-1 seryl-tRNA synthetase subfamily. In terms of assembly, homodimer. The tRNA molecule binds across the dimer.

Its subcellular location is the cytoplasm. The catalysed reaction is tRNA(Ser) + L-serine + ATP = L-seryl-tRNA(Ser) + AMP + diphosphate + H(+). It catalyses the reaction tRNA(Sec) + L-serine + ATP = L-seryl-tRNA(Sec) + AMP + diphosphate + H(+). It participates in aminoacyl-tRNA biosynthesis; selenocysteinyl-tRNA(Sec) biosynthesis; L-seryl-tRNA(Sec) from L-serine and tRNA(Sec): step 1/1. Its function is as follows. Catalyzes the attachment of serine to tRNA(Ser). Is also able to aminoacylate tRNA(Sec) with serine, to form the misacylated tRNA L-seryl-tRNA(Sec), which will be further converted into selenocysteinyl-tRNA(Sec). The chain is Serine--tRNA ligase from Synechococcus sp. (strain CC9311).